Reading from the N-terminus, the 266-residue chain is Undecaprenyl-diphosphatase (266 aa).

8 consecutive transmembrane segments (helical) span residues 4 to 24 (ILSA…PISS), 39 to 59 (LSII…IIYY), 86 to 106 (LKLI…GTFI), 112 to 132 (MFTL…ILML), 145 to 165 (ILLA…PGIS), 182 to 202 (KSAF…AILL), 210 to 230 (IFMV…FVVG), and 246 to 266 (LYYF…FVRI).

This sequence belongs to the UppP family.

The protein localises to the cell inner membrane. The enzyme catalyses di-trans,octa-cis-undecaprenyl diphosphate + H2O = di-trans,octa-cis-undecaprenyl phosphate + phosphate + H(+). Functionally, catalyzes the dephosphorylation of undecaprenyl diphosphate (UPP). Confers resistance to bacitracin. This Borreliella burgdorferi (strain ATCC 35210 / DSM 4680 / CIP 102532 / B31) (Borrelia burgdorferi) protein is Undecaprenyl-diphosphatase.